Consider the following 1295-residue polypeptide: Phosphoribosylformylglycinamidine synthase (1295 aa).

The tract at residues 305–327 is disordered; the sequence is WPGAATGSGGEIRDEGATGRGAK. ATP-binding positions include 307-318 and Ala-678; that span reads GAATGSGGEIRD. Residues Glu-718, Asn-722, and Asp-884 each coordinate Mg(2+). Ser-886 is an ATP binding site. One can recognise a Glutamine amidotransferase type-1 domain in the interval 1042 to 1295; the sequence is VAVLREQGVN…IFRNARKQLG (254 aa). Cys-1135 serves as the catalytic Nucleophile. Catalysis depends on residues His-1260 and Glu-1262.

In the N-terminal section; belongs to the FGAMS family. In terms of assembly, monomer.

It localises to the cytoplasm. It carries out the reaction N(2)-formyl-N(1)-(5-phospho-beta-D-ribosyl)glycinamide + L-glutamine + ATP + H2O = 2-formamido-N(1)-(5-O-phospho-beta-D-ribosyl)acetamidine + L-glutamate + ADP + phosphate + H(+). It participates in purine metabolism; IMP biosynthesis via de novo pathway; 5-amino-1-(5-phospho-D-ribosyl)imidazole from N(2)-formyl-N(1)-(5-phospho-D-ribosyl)glycinamide: step 1/2. Its function is as follows. Phosphoribosylformylglycinamidine synthase involved in the purines biosynthetic pathway. Catalyzes the ATP-dependent conversion of formylglycinamide ribonucleotide (FGAR) and glutamine to yield formylglycinamidine ribonucleotide (FGAM) and glutamate. The protein is Phosphoribosylformylglycinamidine synthase of Escherichia coli (strain UTI89 / UPEC).